The primary structure comprises 152 residues: MFRGHSNRSLDPKGRLMLPPEFREEIFRLVPDGRVMLTNNFDGAISGYPMPEWEAVEASFRAGNTLMPGFRDIERFFIAGATEVTVDKQGRILIPPYLRTYAGLDKEMVLAGVGTKFEIWDQGRFEERLRQTAANFNAHMEAMAASGVSLRF.

2 SpoVT-AbrB domains span residues 5–52 (HSNR…PMPE) and 81–124 (ATEV…DQGR).

Belongs to the MraZ family. Forms oligomers.

It is found in the cytoplasm. The protein resides in the nucleoid. The sequence is that of Transcriptional regulator MraZ from Solidesulfovibrio magneticus (strain ATCC 700980 / DSM 13731 / RS-1) (Desulfovibrio magneticus).